A 475-amino-acid chain; its full sequence is Sensor histidine kinase QseE (475 aa).

Over 1–13 (MKRWPVFPRSLRQ) the chain is Cytoplasmic. The helical transmembrane segment at 14–34 (LVMLAFLLILLPLLVLAWQAW) threads the bilayer. The Periplasmic segment spans residues 35–173 (QSLNALSDQA…LQREIAERGQ (139 aa)). A helical transmembrane segment spans residues 174 to 194 (YFGWQSLVLFLVSLVMVLLFT). Residues 195 to 475 (RMIIGPVKNI…IELPSSKNTK (281 aa)) lie on the Cytoplasmic side of the membrane. The Histidine kinase domain maps to 256 to 472 (HLSHELKTPL…CFRIELPSSK (217 aa)). Residue His259 is modified to Phosphohistidine; by autocatalysis.

Autophosphorylated.

The protein localises to the cell inner membrane. It catalyses the reaction ATP + protein L-histidine = ADP + protein N-phospho-L-histidine.. Its function is as follows. Member of the two-component regulatory system QseF/QseE involved in the regulation of virulence and metabolism in EHEC. Required for pedestal formation in host epithelial cells during infection. Autophosphorylates in response to epinephrine, sulfate or phosphate and then probably transfers its phosphate group to QseF. This chain is Sensor histidine kinase QseE (qseE), found in Escherichia coli O157:H7.